Here is a 238-residue protein sequence, read N- to C-terminus: Sugar fermentation stimulation protein homolog (238 aa).

The protein belongs to the SfsA family.

The polypeptide is Sugar fermentation stimulation protein homolog (Alkalilimnicola ehrlichii (strain ATCC BAA-1101 / DSM 17681 / MLHE-1)).